The chain runs to 171 residues: 3-hydroxydecanoyl-[acyl-carrier-protein] dehydratase (171 aa).

H70 is an active-site residue.

Belongs to the thioester dehydratase family. FabA subfamily. As to quaternary structure, homodimer.

The protein localises to the cytoplasm. It catalyses the reaction a (3R)-hydroxyacyl-[ACP] = a (2E)-enoyl-[ACP] + H2O. It carries out the reaction (3R)-hydroxydecanoyl-[ACP] = (2E)-decenoyl-[ACP] + H2O. The catalysed reaction is (2E)-decenoyl-[ACP] = (3Z)-decenoyl-[ACP]. It functions in the pathway lipid metabolism; fatty acid biosynthesis. Its function is as follows. Necessary for the introduction of cis unsaturation into fatty acids. Catalyzes the dehydration of (3R)-3-hydroxydecanoyl-ACP to E-(2)-decenoyl-ACP and then its isomerization to Z-(3)-decenoyl-ACP. Can catalyze the dehydratase reaction for beta-hydroxyacyl-ACPs with saturated chain lengths up to 16:0, being most active on intermediate chain length. The chain is 3-hydroxydecanoyl-[acyl-carrier-protein] dehydratase from Mesorhizobium japonicum (strain LMG 29417 / CECT 9101 / MAFF 303099) (Mesorhizobium loti (strain MAFF 303099)).